The chain runs to 410 residues: Tegument protein VP16 homolog (410 aa).

The disordered stretch occupies residues 388 to 410; the sequence is PPSPSEILPGDPPRPPTCGFLTR.

The protein belongs to the herpesviridae tegument protein VP16 protein family. As to quaternary structure, associates with the VP16-induced complex; binding to host HCFC1 activates VP16 for association with the octamer motif-binding host protein POU2F1, to form a multiprotein-DNA complex responsible for activating transcription of the viral immediate early genes.

Its subcellular location is the virion tegument. The protein resides in the host nucleus. Functionally, transcriptional activator of immediate-early (IE) gene products (alpha genes). Acts as a key activator of lytic infection by initiating the lytic program through the assembly of the transcriptional regulatory VP16-induced complex composed of VP16 and two cellular factors, HCFC1 and POU2F1. VP16-induced complex represents a regulatory switch: when it is on, it promotes IE-gene expression and thus lytic infection, and when it is off, it limits IE-gene transcription favoring latent infection. May play a role in the aggregation of tegument proteins around nucleocapsids during virus morphogenesis. The protein is Tegument protein VP16 homolog of Varicella-zoster virus (strain Dumas) (HHV-3).